The following is a 66-amino-acid chain: Metallothionein-like protein type 3 (66 aa).

It belongs to the metallothionein superfamily. Type 15 family.

In terms of biological role, metallothioneins have a high content of cysteine residues that bind various heavy metals. In Malus domestica (Apple), this protein is Metallothionein-like protein type 3 (MT2).